Reading from the N-terminus, the 491-residue chain is Carbohydrate ABC transporter substrate-binding protein (491 aa).

The Zn(2+) site is built by aspartate 212, histidine 247, histidine 252, and glutamate 256.

Belongs to the bacterial solute-binding protein 1 family. As to quaternary structure, exists as a monomer, homodimer, homotrimer and homotetramer; oligomerization increases with higher protein concentration.

It localises to the cell surface. In terms of biological role, probably part of an ABC transporter complex involved in carbohydrate transport. The chain is Carbohydrate ABC transporter substrate-binding protein from Streptococcus pneumoniae serotype 4 (strain ATCC BAA-334 / TIGR4).